We begin with the raw amino-acid sequence, 350 residues long: L-threonine 3-dehydrogenase (350 aa).

Cysteine 42 serves as a coordination point for Zn(2+). Catalysis depends on charge relay system residues threonine 44 and histidine 47. Residues histidine 67, glutamate 68, cysteine 97, cysteine 100, cysteine 103, and cysteine 111 each contribute to the Zn(2+) site. NAD(+) is bound by residues leucine 179, glutamate 199, arginine 204, 266–268 (LGL), and 291–292 (IT).

This sequence belongs to the zinc-containing alcohol dehydrogenase family. Homotetramer. Zn(2+) is required as a cofactor.

It localises to the cytoplasm. The catalysed reaction is L-threonine + NAD(+) = (2S)-2-amino-3-oxobutanoate + NADH + H(+). It participates in amino-acid degradation; L-threonine degradation via oxydo-reductase pathway; glycine from L-threonine: step 1/2. In terms of biological role, catalyzes the NAD(+)-dependent oxidation of L-threonine to 2-amino-3-ketobutyrate. To a lesser extent, also catalyzes the oxidation of L-serine. This Thermococcus kodakarensis (strain ATCC BAA-918 / JCM 12380 / KOD1) (Pyrococcus kodakaraensis (strain KOD1)) protein is L-threonine 3-dehydrogenase.